A 177-amino-acid chain; its full sequence is MALDELKAAVPDYAKDLRLNLGSVIGNSDLPQQQLWGTVLACAIASRSPRVLRELEPQAKANLSPEAYTAAKSAAAIMAMNNVFYRTRHLLSDPEYGTLRAGLRMNVIGNPGVEKVDFELWSLAVSAVNGCGQCLDSHEQVLRKAGVDRDTIQEAFKIAAVIQAVGTTLDAEAVLAE.

Catalysis depends on Cys-131, which acts as the Proton donor. Residues Cys-131 and Cys-134 are joined by a disulfide bond. The active-site Cysteine sulfenic acid (-SOH) intermediate is Cys-134.

This sequence belongs to the AhpD family. Homotrimer.

It catalyses the reaction N(6)-[(R)-dihydrolipoyl]-L-lysyl-[lipoyl-carrier protein] + a hydroperoxide = N(6)-[(R)-lipoyl]-L-lysyl-[lipoyl-carrier protein] + an alcohol + H2O. Functionally, antioxidant protein with alkyl hydroperoxidase activity. Required for the reduction of the AhpC active site cysteine residues and for the regeneration of the AhpC enzyme activity. This is Alkyl hydroperoxide reductase AhpD from Streptomyces avermitilis (strain ATCC 31267 / DSM 46492 / JCM 5070 / NBRC 14893 / NCIMB 12804 / NRRL 8165 / MA-4680).